We begin with the raw amino-acid sequence, 370 residues long: MAESNKEAIDSARSNVFKESESLEGTCAKIGGYDFNNGIDHSKLLKSMVSTGFQASNLGDAMIITNQMLEWRLSHDEVPENCSEEEKKNRESVKCKIFLGFTSNLISSGVRETICYLTQHRMVDVLVTTTGGIEEDFIKCLASTYKGKFSLPGADLRSKGLNRIGNLIVPNDNYIKFEDWIIPIFDQMLIEQKTQNVLWTPSRMIARLGKEINNETSYLYWAYKNNIPVFCPSITDGSIGDMLYFHSVSNPGPGLVVDIVQDVIAMDNEAVHASPQKTGIIILGGGLPKHHICNANMMRNGADFAVFINTAQEYDGSDSGARPDEAVSWGKISSTGKAVKVHCDATIAFPLLVAETFAVKKEKASKVNGF.

This sequence belongs to the deoxyhypusine synthase family. As to quaternary structure, homotetramer. Requires NAD(+) as cofactor.

It carries out the reaction putrescine + spermidine = sym-homospermidine + propane-1,3-diamine. It functions in the pathway alkaloid biosynthesis; pyrrolizidine alkaloid biosynthesis. Its function is as follows. Catalyzes the transfer of an aminobutyl unit from spermidine onto putrescine. The resulting polyamine homospermidine is a precursor in the biosynthesis of pyrrolizidine alkaloids. This chain is Homospermidine synthase (HSS1), found in Senecio vulgaris (Common groundsel).